The primary structure comprises 286 residues: Formamidopyrimidine-DNA glycosylase (286 aa).

Proline 2 serves as the catalytic Schiff-base intermediate with DNA. The active-site Proton donor is glutamate 3. The Proton donor; for beta-elimination activity role is filled by lysine 61. Residues histidine 96, arginine 115, and lysine 161 each contribute to the DNA site. An FPG-type zinc finger spans residues 247–281; the sequence is EAYGREGEPCRRCGRAMRREAFMNRSSYFCPSCQR. Arginine 271 (proton donor; for delta-elimination activity) is an active-site residue.

It belongs to the FPG family. In terms of assembly, monomer. Zn(2+) serves as cofactor.

The catalysed reaction is Hydrolysis of DNA containing ring-opened 7-methylguanine residues, releasing 2,6-diamino-4-hydroxy-5-(N-methyl)formamidopyrimidine.. It carries out the reaction 2'-deoxyribonucleotide-(2'-deoxyribose 5'-phosphate)-2'-deoxyribonucleotide-DNA = a 3'-end 2'-deoxyribonucleotide-(2,3-dehydro-2,3-deoxyribose 5'-phosphate)-DNA + a 5'-end 5'-phospho-2'-deoxyribonucleoside-DNA + H(+). Its function is as follows. Involved in base excision repair of DNA damaged by oxidation or by mutagenic agents. Acts as a DNA glycosylase that recognizes and removes damaged bases. Has a preference for oxidized purines, such as 7,8-dihydro-8-oxoguanine (8-oxoG). Has AP (apurinic/apyrimidinic) lyase activity and introduces nicks in the DNA strand. Cleaves the DNA backbone by beta-delta elimination to generate a single-strand break at the site of the removed base with both 3'- and 5'-phosphates. The protein is Formamidopyrimidine-DNA glycosylase of Mycobacteroides abscessus (strain ATCC 19977 / DSM 44196 / CCUG 20993 / CIP 104536 / JCM 13569 / NCTC 13031 / TMC 1543 / L948) (Mycobacterium abscessus).